A 795-amino-acid chain; its full sequence is Inactive N-acetylated-alpha-linked acidic dipeptidase-like protein 2 (795 aa).

A disordered region spans residues methionine 1–asparagine 38. Topologically, residues methionine 1–asparagine 121 are cytoplasmic. Residue serine 92 is modified to Phosphoserine. A helical; Signal-anchor for type II membrane protein membrane pass occupies residues phenylalanine 122 to isoleucine 142. The Extracellular segment spans residues glycine 143–asparagine 795. N-linked (GlcNAc...) asparagine glycans are attached at residues asparagine 295, asparagine 373, asparagine 534, and asparagine 759.

The protein belongs to the peptidase M28 family. M28B subfamily. As to expression, expressed at higher level in kidney and placenta. In embryo, it is mainly confined to duodenal and stomach endoderm, mesonephros, metanephros and pancreas.

The protein resides in the membrane. Its function is as follows. May be catalytically inactive. This Homo sapiens (Human) protein is Inactive N-acetylated-alpha-linked acidic dipeptidase-like protein 2 (NAALADL2).